Consider the following 63-residue polypeptide: 2-hydroxymuconate tautomerase (63 aa).

Residue proline 2 is the Proton acceptor; via imino nitrogen of the active site.

This sequence belongs to the 4-oxalocrotonate tautomerase family. In terms of assembly, homohexamer.

It carries out the reaction (2Z,4E)-2-hydroxyhexa-2,4-dienedioate = (3E)-2-oxohex-3-enedioate. The protein operates within xenobiotic degradation; toluene degradation. It participates in xenobiotic degradation; xylene degradation. In terms of biological role, catalyzes the ketonization of 2-hydroxymuconate stereoselectively to yield 2-oxo-3-hexenedioate. The sequence is that of 2-hydroxymuconate tautomerase (xylH) from Pseudomonas putida (Arthrobacter siderocapsulatus).